The primary structure comprises 149 residues: Large ribosomal subunit protein uL22c (149 aa).

This sequence belongs to the universal ribosomal protein uL22 family. In terms of assembly, part of the 50S ribosomal subunit.

It is found in the plastid. The protein resides in the chloroplast. Its function is as follows. This protein binds specifically to 23S rRNA. Functionally, the globular domain of the protein is located near the polypeptide exit tunnel on the outside of the subunit, while an extended beta-hairpin is found that lines the wall of the exit tunnel in the center of the 70S ribosome. The sequence is that of Large ribosomal subunit protein uL22c (rpl22) from Hordeum vulgare (Barley).